The following is a 167-amino-acid chain: Protein-lysine myristoyltransferase RtxC (167 aa).

Residues H20 and D89 contribute to the active site.

It belongs to the RTX toxin acyltransferase family.

It localises to the cytoplasm. The catalysed reaction is tetradecanoyl-[ACP] + L-lysyl-[protein] = N(6)-tetradecanoyl-L-lysyl-[protein] + holo-[ACP] + H(+). Its function is as follows. Protein-lysine myristoyltransferase that catalyzes myristoylation of the protoxin (RtxA) at two internal lysine residues, thereby converting it to the active toxin. The chain is Protein-lysine myristoyltransferase RtxC from Kingella kingae.